Here is a 101-residue protein sequence, read N- to C-terminus: MVERLSEAARRAALDALPDWSELPDREAITRTLKFKDFGQAFGFMAQVALVAEKHDHHPEWRNVYNTVEVTLTTHDAGGVTARDVDLARAIDAIAAPLSPR.

It belongs to the pterin-4-alpha-carbinolamine dehydratase family.

It carries out the reaction (4aS,6R)-4a-hydroxy-L-erythro-5,6,7,8-tetrahydrobiopterin = (6R)-L-erythro-6,7-dihydrobiopterin + H2O. In Rhodopseudomonas palustris (strain BisA53), this protein is Putative pterin-4-alpha-carbinolamine dehydratase.